Here is a 160-residue protein sequence, read N- to C-terminus: Ribosomal RNA large subunit methyltransferase H (160 aa).

S-adenosyl-L-methionine-binding positions include G108 and 127 to 132; that span reads FGLMTW.

It belongs to the RNA methyltransferase RlmH family. Homodimer.

Its subcellular location is the cytoplasm. It carries out the reaction pseudouridine(1915) in 23S rRNA + S-adenosyl-L-methionine = N(3)-methylpseudouridine(1915) in 23S rRNA + S-adenosyl-L-homocysteine + H(+). Functionally, specifically methylates the pseudouridine at position 1915 (m3Psi1915) in 23S rRNA. This chain is Ribosomal RNA large subunit methyltransferase H, found in Bartonella bacilliformis (strain ATCC 35685 / KC583 / Herrer 020/F12,63).